A 332-amino-acid polypeptide reads, in one-letter code: MKVTFEQLKAAFNRVLISRGVDSETADACAEMFARTTESGVYSHGVNRFPRFIQQLENGDIIPDAQPKRITSLGAIEQWDAQRSIGNLTAKKMMDRAIELAADHGIGLVALRNANHWMRGGSYGWQAAEKGYIGICWTNSIAVMPPWGAKECRIGTNPLIVAIPSTPITMVDMSMSMFSYGMLEVNRLAGRQLPVDGGFDDEGNLTKEPGVIEKNRRILPMGYWKGSGMSIVLDMIATLLSDGASVAEVTEDNSDEYGISQIFIAIEVDKLIDGPTRDAKLQRIMDYVTSAERADENQSIRLPGHEFTTLLAENRRNGITVDDSVWAKIQAL.

His-44 (proton donor) is an active-site residue. NAD(+) is bound by residues 168-174 (ITMVDMS), 224-225 (WK), and 304-306 (GHE).

This sequence belongs to the LDH2/MDH2 oxidoreductase family. DlgD subfamily. In terms of assembly, homodimer.

It localises to the cytoplasm. The enzyme catalyses 3-dehydro-L-gulonate + NAD(+) = 2,3-dioxo-L-gulonate + NADH + H(+). It catalyses the reaction 3-dehydro-L-gulonate + NADP(+) = 2,3-dioxo-L-gulonate + NADPH + H(+). Its function is as follows. Catalyzes the reduction of 2,3-diketo-L-gulonate in the presence of NADH, to form 3-keto-L-gulonate. This chain is 2,3-diketo-L-gulonate reductase, found in Escherichia coli O127:H6 (strain E2348/69 / EPEC).